The chain runs to 162 residues: Anaerobic nitrite reductase (162 aa).

At Ser2 the chain carries N-acetylserine. Positions 9 to 158 constitute a Globin domain; sequence VFTEEQEALV…LVAAIKFEMK (150 aa). Residues 42–46 carry the Homodimerization motif; the sequence is EIAPS. Residues Ser52, Lys66, His70, Arg100, and His105 each contribute to the heme b site. Residues 112–124 carry the Homodimerization motif; it reads NEHFEVTRFALLE.

The protein belongs to the plant globin family. As to quaternary structure, homodimer with distinct heme coordination in each subunits. Heme b serves as cofactor. As to expression, root nodules.

It is found in the cytoplasm. The protein localises to the nucleus. It catalyses the reaction Fe(III)-heme b-[protein] + nitric oxide + H2O = Fe(II)-heme b-[protein] + nitrite + 2 H(+). Its function is as follows. Phytoglobin that reduces nitrite to nitric oxide (NO) under anoxic conditions (e.g. during flooding or in waterlogged soil) and upon root nodulation. Required for general plant development and during nodulation, especially for the onset of symbiosis. Monitors nitric oxide (NO) levels during early phase of the nitrogen-fixing symbiosis and buffers oxygen in functioning nodules. May not function as an oxygen storage or transport protein. Has an unusually high affinity for O(2) through a hexacoordinate heme iron because of a very low dissociation constant. The sequence is that of Anaerobic nitrite reductase from Parasponia andersonii (Sponia andersonii).